Reading from the N-terminus, the 534-residue chain is uncharacterized protein (534 aa).

Disordered regions lie at residues 1 to 150, 252 to 284, and 383 to 434; these read MSDS…DIPP, RRFR…NGQP, and WKSQ…PSLP. Residues 8-67 are compositionally biased toward basic and acidic residues; the sequence is SQREDNYSRDRRSRFTEDSYSRRDSQRSGNEAPRESRYYRKEEHLQERSRSRSPARDSRW. Over residues 102–113 the composition is skewed to polar residues; the sequence is SLQSTKATSSRT. Residues 130–141 are compositionally biased toward pro residues; that stretch reads PSAPAPPLPPSS. Positions 252 to 262 are enriched in basic and acidic residues; that stretch reads RRFRRREDNER. Residues 263-272 are compositionally biased toward low complexity; that stretch reads NNSNSPRNFS. Residues 393–408 are compositionally biased toward polar residues; that stretch reads NQGNRAYNPPNRNQAF.

This is an uncharacterized protein from Schizosaccharomyces pombe (strain 972 / ATCC 24843) (Fission yeast).